The primary structure comprises 126 residues: Large ribosomal subunit protein bL12 (126 aa).

The protein belongs to the bacterial ribosomal protein bL12 family. As to quaternary structure, homodimer. Part of the ribosomal stalk of the 50S ribosomal subunit. Forms a multimeric L10(L12)X complex, where L10 forms an elongated spine to which 2 to 4 L12 dimers bind in a sequential fashion. Binds GTP-bound translation factors.

Its function is as follows. Forms part of the ribosomal stalk which helps the ribosome interact with GTP-bound translation factors. Is thus essential for accurate translation. This is Large ribosomal subunit protein bL12 from Chlorobium phaeobacteroides (strain BS1).